A 40-amino-acid polypeptide reads, in one-letter code: Photosystem II reaction center protein J (40 aa).

Residues 8–28 (IPLWLIGTVTGILVIGLIGVF) form a helical membrane-spanning segment.

It belongs to the PsbJ family. In terms of assembly, PSII is composed of 1 copy each of membrane proteins PsbA, PsbB, PsbC, PsbD, PsbE, PsbF, PsbH, PsbI, PsbJ, PsbK, PsbL, PsbM, PsbT, PsbX, PsbY, PsbZ, Psb30/Ycf12, at least 3 peripheral proteins of the oxygen-evolving complex and a large number of cofactors. It forms dimeric complexes.

It is found in the plastid. It localises to the chloroplast thylakoid membrane. In terms of biological role, one of the components of the core complex of photosystem II (PSII). PSII is a light-driven water:plastoquinone oxidoreductase that uses light energy to abstract electrons from H(2)O, generating O(2) and a proton gradient subsequently used for ATP formation. It consists of a core antenna complex that captures photons, and an electron transfer chain that converts photonic excitation into a charge separation. The sequence is that of Photosystem II reaction center protein J from Nymphaea alba (White water-lily).